The chain runs to 561 residues: MNSSLTAQRRGSDAELGPWVMAARSKDAAPSQRDGLLPVKVEEDSLGSWEPSYPAASPDPETSRLHFRQLRYQEVAGPEEALSRLRELCRRWLRPELLSKEQILELLVLEQFLTILPEELQAWVREHCPESGEEAVAVVRALQRALDGTSSQGMVTFEDMAVSLTWEEWERLDPARSDFCRESAQKDSGSTVPPSLESRVENKELIPVQQILEEAEPQGRLQEAFQGKRPLFSKCVSTHEDRVEKQSGDPLPLKLENSPEAEGFNSISDVNKNGSIEGEDSKNNELQNSARCSNLVLCQHIPKAERPTDSEEHGNKCKQSFHMVTWHVLKPHKSDSGDSFHHSSLFETQRQLHEERPYKCGNCGKSFKQRSDLFRHQRIHTGEKPYGCQECGKSFSQSAALTKHQRTHTGEKPYTCLKCGERFRQNSHLNRHQSTHSRDKHFKCEECGETCHISNLFRHQRLHKGERPYKCEECEKSFKQRSDLFKHHRIHTGEKPYGCSVCGKRFNQSATLIKHQRIHTGEKPYKCLECGERFRQSTHLIRHQRIHQNKVLSAGRGGSRL.

Ser12 is modified (phosphoserine). A Glycyl lysine isopeptide (Lys-Gly) (interchain with G-Cter in SUMO2) cross-link involves residue Lys40. The tract at residues 43-62 is disordered; that stretch reads EDSLGSWEPSYPAASPDPET. In terms of domain architecture, SCAN box spans 64–146; that stretch reads RLHFRQLRYQ…AVVRALQRAL (83 aa). One can recognise a KRAB domain in the interval 155–230; it reads VTFEDMAVSL…LQEAFQGKRP (76 aa). Glycyl lysine isopeptide (Lys-Gly) (interchain with G-Cter in SUMO2) cross-links involve residues Lys203 and Lys228. Basic and acidic residues predominate over residues 238 to 247; it reads THEDRVEKQS. Residues 238-283 form a disordered region; it reads THEDRVEKQSGDPLPLKLENSPEAEGFNSISDVNKNGSIEGEDSKN. Lys254 is covalently cross-linked (Glycyl lysine isopeptide (Lys-Gly) (interchain with G-Cter in SUMO2)). Positions 265–274 are enriched in polar residues; sequence NSISDVNKNG. A Glycyl lysine isopeptide (Lys-Gly) (interchain with G-Cter in SUMO2) cross-link involves residue Lys282. 7 consecutive C2H2-type zinc fingers follow at residues 358-380, 386-408, 414-436, 442-463, 469-491, 497-519, and 525-547; these read YKCG…QRIH, YGCQ…QRTH, YTCL…QSTH, FKCE…QRLH, YKCE…HRIH, YGCS…QRIH, and YKCL…QRIH. Lys443 participates in a covalent cross-link: Glycyl lysine isopeptide (Lys-Gly) (interchain with G-Cter in SUMO2).

It belongs to the krueppel C2H2-type zinc-finger protein family.

Its subcellular location is the nucleus. In terms of biological role, may be involved in transcriptional regulation. The sequence is that of Zinc finger protein 394 (ZNF394) from Pan paniscus (Pygmy chimpanzee).